A 302-amino-acid chain; its full sequence is Sulfate adenylyltransferase subunit 2 (302 aa).

The interval 280–302 (RQGRAIDHDQSGSMELKKRQGYF) is disordered.

This sequence belongs to the PAPS reductase family. CysD subfamily. In terms of assembly, heterodimer composed of CysD, the smaller subunit, and CysN.

It catalyses the reaction sulfate + ATP + H(+) = adenosine 5'-phosphosulfate + diphosphate. Its pathway is sulfur metabolism; hydrogen sulfide biosynthesis; sulfite from sulfate: step 1/3. With CysN forms the ATP sulfurylase (ATPS) that catalyzes the adenylation of sulfate producing adenosine 5'-phosphosulfate (APS) and diphosphate, the first enzymatic step in sulfur assimilation pathway. APS synthesis involves the formation of a high-energy phosphoric-sulfuric acid anhydride bond driven by GTP hydrolysis by CysN coupled to ATP hydrolysis by CysD. The protein is Sulfate adenylyltransferase subunit 2 of Vibrio vulnificus (strain CMCP6).